The sequence spans 419 residues: Mitogen-activated protein kinase pmk-2 (419 aa).

Positions Tyr49–Leu350 constitute a Protein kinase domain. ATP-binding positions include Leu55–Val63 and Lys78. The active-site Proton acceptor is the Asp210. Thr222 bears the Phosphothreonine mark. The TXY signature appears at Thr222–Tyr224. Tyr224 is subject to Phosphotyrosine.

Belongs to the protein kinase superfamily. CMGC Ser/Thr protein kinase family. MAP kinase subfamily. Mg(2+) is required as a cofactor. Post-translationally, dually phosphorylated on Thr-222 and Tyr-224, which activates the enzyme.

Its subcellular location is the cytoplasm. The enzyme catalyses L-seryl-[protein] + ATP = O-phospho-L-seryl-[protein] + ADP + H(+). The catalysed reaction is L-threonyl-[protein] + ATP = O-phospho-L-threonyl-[protein] + ADP + H(+). With respect to regulation, activated by phosphorylation on threonine and tyrosine. Inhibited by pyridinyl-imidazole related compounds. Its function is as follows. Responds to activation by environmental stress and pro-inflammatory cytokines by phosphorylating downstream targets. The polypeptide is Mitogen-activated protein kinase pmk-2 (pmk-2) (Caenorhabditis elegans).